The chain runs to 93 residues: NADH-ubiquinone oxidoreductase chain 4L (93 aa).

The next 3 helical transmembrane spans lie at 2–22, 27–47, and 62–82; these read ALYEMNLSVILFLIGILGFVL, IILMLISIEVMLLAVTLLVLV, and IYIIAIAGAESAIGLGILVAY.

The protein belongs to the complex I subunit 4L family.

Its subcellular location is the mitochondrion inner membrane. The enzyme catalyses a ubiquinone + NADH + 5 H(+)(in) = a ubiquinol + NAD(+) + 4 H(+)(out). In terms of biological role, core subunit of the mitochondrial membrane respiratory chain NADH dehydrogenase (Complex I) that is believed to belong to the minimal assembly required for catalysis. Complex I functions in the transfer of electrons from NADH to the respiratory chain. The immediate electron acceptor for the enzyme is believed to be ubiquinone. The chain is NADH-ubiquinone oxidoreductase chain 4L (ND4L) from Mycosarcoma maydis (Corn smut fungus).